A 435-amino-acid chain; its full sequence is Eukaryotic translation initiation factor 3 subunit E (435 aa).

In terms of domain architecture, PCI spans 241-409 (TDMFFSPSYI…GTVIMNHPPQ (169 aa)).

It belongs to the eIF-3 subunit E family. Component of the eukaryotic translation initiation factor 3 (eIF-3) complex.

Its subcellular location is the cytoplasm. In terms of biological role, component of the eukaryotic translation initiation factor 3 (eIF-3) complex, which is involved in protein synthesis of a specialized repertoire of mRNAs and, together with other initiation factors, stimulates binding of mRNA and methionyl-tRNAi to the 40S ribosome. The eIF-3 complex specifically targets and initiates translation of a subset of mRNAs involved in cell proliferation. This is Eukaryotic translation initiation factor 3 subunit E from Phaeosphaeria nodorum (strain SN15 / ATCC MYA-4574 / FGSC 10173) (Glume blotch fungus).